The chain runs to 555 residues: MRRSKRFEVLAQRPVNQDGLIGEWPEEGLIAMESPYDPASSVKVENGRIVELDGKSRAEFDMIDRFIADYAINVPEAERAMQLDALEIARMLVDIHVSREEIIAITTAITPAKRLEVMAQMNVVEMMMALQKMRARRTPSNQCHVTNLKDNPVQIAADAAEAGIRGFSEQETTVGIARYAPFNALALLVGSQCGAPGVLTQCSVEEATELELGMRGLTSYAETVSVYGTESVFTDGDDTPWSKAFLASAYASRGLKMRYTSGTGSEALMGYSESKSMLYLESRCIFITKGAGVQGLQNGAVSCIGMTGAVPSGIRAVLAENLIASMLDLEVASANDQTFSHSDIRRTARTLMQMLPGTDFIFSGYSAVPNYDNMFAGSNFDAEDFDDYNILQRDLMVDGGLRPVTEEETIAIRNKAARAIQAVFRELGLPLISDEEVDAATYAHGSKDMPARNVVEDLAAVEEMMKRNITGLDIVGALSSSGFEDIASNILNMLRQRVTGDYLQTSAILDRQFDVVSAVNDINDYQGPGTGYRISAERWAEIKNIAGVVQPGSIE.

The protein belongs to the diol/glycerol dehydratase large subunit family. In terms of assembly, probably consists of three subunits: large, medium, and small. The cofactor is adenosylcob(III)alamin.

The catalysed reaction is glycerol = 3-hydroxypropanal + H2O. This is Glycerol dehydratase large subunit (dhaB) from Citrobacter freundii.